Consider the following 417-residue polypeptide: Phosphoglycerate kinase 1 (417 aa).

Ser-2 carries the post-translational modification N-acetylserine. Ser-2 and Ser-4 each carry phosphoserine. Lys-6 is subject to N6-succinyllysine. Residue Lys-11 is modified to N6-acetyllysine. (2R)-3-phosphoglycerate contacts are provided by Val-23, Asp-24, Phe-25, Asn-26, Gln-38, Arg-39, Ser-62, His-63, Gly-65, and Arg-66. The interval 38–43 (QRIKAA) is mitochondrial targeting region exposed following cis-trans isomerization by PIN1 and recognized by the TOM complex for mitochondrial translocation of the protein. Lys-75 carries the N6-acetyllysine modification. Residue Tyr-76 is modified to Phosphotyrosine. Residues Lys-86 and Lys-91 each carry the N6-acetyllysine modification. Position 97 is an N6-(2-hydroxyisobutyryl)lysine; alternate (Lys-97). Lys-97 is modified (N6-acetyllysine; alternate). The (2R)-3-phosphoglycerate site is built by Leu-122 and Arg-123. Lys-131 bears the N6-acetyllysine; alternate mark. At Lys-131 the chain carries N6-malonyllysine; alternate. An N6-acetyllysine modification is found at Lys-146. (2R)-3-phosphoglycerate-binding residues include His-170 and Arg-171. Residue Lys-191 is modified to N6-succinyllysine. Tyr-196 carries the phosphotyrosine modification. Lys-199 bears the N6-acetyllysine mark. Ser-203 carries the post-translational modification Phosphoserine. Gly-214 is an ADP binding site. Gly-214 contacts CDP. AMP-binding residues include Ala-215 and Lys-216. Position 215 (Ala-215) interacts with ATP. Ala-215 lines the Mg(2+) pocket. Position 216 is an N6-(2-hydroxyisobutyryl)lysine (Lys-216). Residues Ala-218 and Asp-219 each contribute to the Mg(2+) site. Asp-219 is a CDP binding site. AMP is bound at residue Lys-220. Lys-220 contributes to the ATP binding site. Lys-220 is modified (N6-(2-hydroxyisobutyryl)lysine). Residue Gly-238 participates in ADP binding. CDP is bound at residue Gly-238. AMP is bound at residue Gly-239. Gly-239 contacts ATP. Lys-267 and Lys-291 each carry N6-acetyllysine. Gly-313 provides a ligand contact to AMP. Gly-313 is a binding site for ATP. At Lys-323 the chain carries N6-(2-hydroxyisobutyryl)lysine. CDP-binding residues include Gly-338, Val-340, and Phe-343. ADP is bound at residue Phe-343. Residue Glu-344 coordinates AMP. 3 residues coordinate ATP: Glu-344, Asp-375, and Thr-376. Asp-375 is a binding site for Mg(2+).

It belongs to the phosphoglycerate kinase family. In terms of assembly, monomer. Interacts with kinase MAPK1/ERK2; the interaction is direct, occurs under hypoxic conditions, and promotes its interaction with PIN1. Interacts with peptidyl-prolyl cis-trans isomerase PIN1; the interaction is direct, occurs under hypoxic conditions, and targets the protein to the mitochondrion by promoting interactions with the TOM complex. Interacts with mitochondrial circRNA mcPGK1 (via its 2nd stem-loop); the interaction is direct and targets the protein to the mitochondrion by promoting interactions with the TOM complex. Interacts with pyruvate dehydrogenase kinase PDK1; the interaction is direct, occurs under hypoxic conditions and leads to PDK1-mediated inhibition of pyruvate dehydrogenase complex activity. It depends on Mg(2+) as a cofactor. Phosphorylated at Ser-203 by MAPK1/ERK2 under hypoxic conditions, which promotes its mitochondrial targeting.

The protein resides in the cytoplasm. The protein localises to the cytosol. It localises to the mitochondrion matrix. It carries out the reaction (2R)-3-phosphoglycerate + ATP = (2R)-3-phospho-glyceroyl phosphate + ADP. The enzyme catalyses L-seryl-[protein] + ATP = O-phospho-L-seryl-[protein] + ADP + H(+). Its pathway is carbohydrate degradation; glycolysis; pyruvate from D-glyceraldehyde 3-phosphate: step 2/5. Functionally, catalyzes one of the two ATP producing reactions in the glycolytic pathway via the reversible conversion of 1,3-diphosphoglycerate to 3-phosphoglycerate. Both L- and D- forms of purine and pyrimidine nucleotides can be used as substrates, but the activity is much lower on pyrimidines. In addition to its role as a glycolytic enzyme, it seems that PGK-1 acts as a polymerase alpha cofactor protein (primer recognition protein). Acts as a protein kinase when localized to the mitochondrion where it phosphorylates pyruvate dehydrogenase kinase PDK1 to inhibit pyruvate dehydrogenase complex activity and suppress the formation of acetyl-coenzyme A from pyruvate, and consequently inhibit oxidative phosphorylation and promote glycolysis. May play a role in sperm motility. This Notamacropus eugenii (Tammar wallaby) protein is Phosphoglycerate kinase 1 (PGK1).